Consider the following 242-residue polypeptide: Probable transcriptional regulatory protein Bphy_2064 (242 aa).

Belongs to the TACO1 family.

It localises to the cytoplasm. The sequence is that of Probable transcriptional regulatory protein Bphy_2064 from Paraburkholderia phymatum (strain DSM 17167 / CIP 108236 / LMG 21445 / STM815) (Burkholderia phymatum).